The chain runs to 380 residues: MVVFLLLKSQFLYGEDFKLRKGTLIIEEGIIKGFTDEHNEREVIEFKGLVIPSLINAHTHIADNSIKDIGINKTLDELVKPPNGLKHRYLTECSDDLLAEGMKLGLGDMREHGIKYFCDFRENGVRGISLLNKALKCYDYPKAIILGRPIKVDKDEIEEVLKVSNGLGLSGANEFKDDELKLIFKIFKKFKEKDDKKLFAIHAAEHRGAVEYSLNKYGMTEVERLIDLKIKPDFIVHGTHLTDNDLELLKENNIPVVACVRANLSFNVGMPKLNELNDNLLVGIGTDNFMANSPSIFKEMDFIYKLYHIEPKDILRMATINNAKILKLENVGLVDEGFKAVFTFIKPTNAILFSKNIIASVVTRCEKGDVVDFSLMENEE.

Belongs to the metallo-dependent hydrolases superfamily.

This is an uncharacterized protein from Methanocaldococcus jannaschii (strain ATCC 43067 / DSM 2661 / JAL-1 / JCM 10045 / NBRC 100440) (Methanococcus jannaschii).